The chain runs to 523 residues: Na(+)/H(+) antiporter NhaB (523 aa).

The next 10 helical transmembrane spans lie at 28–48 (FLIINPFIVALNPFVAGWLLV), 51–71 (FIFTLSMALKCYPLLPGGLLA), 89–109 (LSANLEVLLLLMFMVAGIYFV), 137–157 (MAAFLSAFLDALTVVAVVISI), 237–257 (FFIRMSAVSIPVLICGLATCV), 302–322 (AIICVWLIVGLAFHLAAVGLI), 347–367 (TESLPFTALLSVFFVVVAVII), 390–410 (LFYIANGVLSMVSDNVFVGTV), 445–465 (VATPNGQAAFLFLLTSTLAPL), and 476–496 (MALPYTIVLAGVGLLSTMYLL).

This sequence belongs to the NhaB Na(+)/H(+) (TC 2.A.34) antiporter family.

The protein resides in the cell inner membrane. It carries out the reaction 2 Na(+)(in) + 3 H(+)(out) = 2 Na(+)(out) + 3 H(+)(in). Its function is as follows. Na(+)/H(+) antiporter that extrudes sodium in exchange for external protons. This Tolumonas auensis (strain DSM 9187 / NBRC 110442 / TA 4) protein is Na(+)/H(+) antiporter NhaB.